We begin with the raw amino-acid sequence, 142 residues long: Hemoglobin subunit alpha-A (142 aa).

The Globin domain occupies 2 to 142 (VLSAADKNNV…VGTVLTAKYR (141 aa)). Position 59 (histidine 59) interacts with O2. Position 88 (histidine 88) interacts with heme b.

Belongs to the globin family. Heterotetramer of two alpha chains and two beta chains. Red blood cells.

In terms of biological role, involved in oxygen transport from the lung to the various peripheral tissues. This chain is Hemoglobin subunit alpha-A (HBAA), found in Meleagris gallopavo (Wild turkey).